Consider the following 109-residue polypeptide: Nucleoid-associated protein HS_1309 (109 aa).

Belongs to the YbaB/EbfC family. Homodimer.

The protein localises to the cytoplasm. It localises to the nucleoid. Binds to DNA and alters its conformation. May be involved in regulation of gene expression, nucleoid organization and DNA protection. This Histophilus somni (strain 129Pt) (Haemophilus somnus) protein is Nucleoid-associated protein HS_1309.